Reading from the N-terminus, the 131-residue chain is Small ribosomal subunit protein uS8 (131 aa).

Belongs to the universal ribosomal protein uS8 family. Part of the 30S ribosomal subunit. Contacts proteins S5 and S12.

Functionally, one of the primary rRNA binding proteins, it binds directly to 16S rRNA central domain where it helps coordinate assembly of the platform of the 30S subunit. This is Small ribosomal subunit protein uS8 from Azoarcus sp. (strain BH72).